Here is a 428-residue protein sequence, read N- to C-terminus: 3-phosphoshikimate 1-carboxyvinyltransferase (428 aa).

3-phosphoshikimate-binding residues include Lys22, Ser23, and Arg27. Lys22 contributes to the phosphoenolpyruvate binding site. The phosphoenolpyruvate site is built by Gly94 and Arg122. Positions 169, 170, 171, 197, 315, and 342 each coordinate 3-phosphoshikimate. Gln171 lines the phosphoenolpyruvate pocket. Residue Asp315 is the Proton acceptor of the active site. The phosphoenolpyruvate site is built by Arg346, Arg389, and Lys414.

This sequence belongs to the EPSP synthase family. As to quaternary structure, monomer.

Its subcellular location is the cytoplasm. It catalyses the reaction 3-phosphoshikimate + phosphoenolpyruvate = 5-O-(1-carboxyvinyl)-3-phosphoshikimate + phosphate. Its pathway is metabolic intermediate biosynthesis; chorismate biosynthesis; chorismate from D-erythrose 4-phosphate and phosphoenolpyruvate: step 6/7. Functionally, catalyzes the transfer of the enolpyruvyl moiety of phosphoenolpyruvate (PEP) to the 5-hydroxyl of shikimate-3-phosphate (S3P) to produce enolpyruvyl shikimate-3-phosphate and inorganic phosphate. This chain is 3-phosphoshikimate 1-carboxyvinyltransferase, found in Cellvibrio japonicus (strain Ueda107) (Pseudomonas fluorescens subsp. cellulosa).